The following is a 347-amino-acid chain: Heat-inducible transcription repressor HrcA (347 aa).

It belongs to the HrcA family.

Negative regulator of class I heat shock genes (grpE-dnaK-dnaJ and groELS operons). Prevents heat-shock induction of these operons. This is Heat-inducible transcription repressor HrcA from Sorangium cellulosum (strain So ce56) (Polyangium cellulosum (strain So ce56)).